The sequence spans 492 residues: Glutamyl-tRNA(Gln) amidotransferase subunit A (492 aa).

Catalysis depends on charge relay system residues K79 and S154. Catalysis depends on S178, which acts as the Acyl-ester intermediate.

Belongs to the amidase family. GatA subfamily. In terms of assembly, heterotrimer of A, B and C subunits.

It catalyses the reaction L-glutamyl-tRNA(Gln) + L-glutamine + ATP + H2O = L-glutaminyl-tRNA(Gln) + L-glutamate + ADP + phosphate + H(+). In terms of biological role, allows the formation of correctly charged Gln-tRNA(Gln) through the transamidation of misacylated Glu-tRNA(Gln) in organisms which lack glutaminyl-tRNA synthetase. The reaction takes place in the presence of glutamine and ATP through an activated gamma-phospho-Glu-tRNA(Gln). The sequence is that of Glutamyl-tRNA(Gln) amidotransferase subunit A from Acinetobacter baumannii (strain ATCC 17978 / DSM 105126 / CIP 53.77 / LMG 1025 / NCDC KC755 / 5377).